The chain runs to 99 residues: Integration host factor subunit alpha (99 aa).

The interval 49–70 (FGNFDLRDKNQRPGRNPKTGED) is disordered.

The protein belongs to the bacterial histone-like protein family. In terms of assembly, heterodimer of an alpha and a beta chain.

Its function is as follows. This protein is one of the two subunits of integration host factor, a specific DNA-binding protein that functions in genetic recombination as well as in transcriptional and translational control. The chain is Integration host factor subunit alpha from Cronobacter sakazakii (strain ATCC BAA-894) (Enterobacter sakazakii).